Here is a 415-residue protein sequence, read N- to C-terminus: Runt-related transcription factor 3 (415 aa).

3 disordered regions span residues 1–48, 176–266, and 375–415; these read MRIP…GGRA, GPRE…FPDP, and NLMN…WRPY. One can recognise a Runt domain in the interval 54–182; it reads SMVDVLADHA…TVDGPREPRR (129 aa). The span at 186–205 shows a compositional bias: basic and acidic residues; it reads KLEDQTKPFPDRFGDLERLR. Residue Lys-192 forms a Glycyl lysine isopeptide (Lys-Gly) (interchain with G-Cter in SUMO2) linkage. Polar residues predominate over residues 209 to 240; that stretch reads TPSTPSPRGSLSTTSHFSSQPQTPIQGTSELN. Ser-243 is subject to Phosphoserine. The segment covering 393–402 has biased composition (polar residues); it reads SHSNSPTALS. Positions 406–415 are enriched in basic and acidic residues; the sequence is RMDEAVWRPY.

Heterodimer with CBFB. RUNX3 binds DNA as a monomer and through the Runt domain. DNA-binding is increased by heterodimerization. Interacts with TLE1 and SUV39H1. The tyrosine phosphorylated form (via runt domain) interacts with SRC (via protein kinase domain). Interacts with FYN and LCK. Interacts with FOXP3. Interacts with ZFHX3. Interacts with TBX21. In terms of processing, phosphorylated on tyrosine residues by SRC. Phosphorylated by LCK and FYN. As to expression, expressed in gastric cancer tissues (at protein level).

Its subcellular location is the nucleus. The protein localises to the cytoplasm. In terms of biological role, forms the heterodimeric complex core-binding factor (CBF) with CBFB. RUNX members modulate the transcription of their target genes through recognizing the core consensus binding sequence 5'-TGTGGT-3', or very rarely, 5'-TGCGGT-3', within their regulatory regions via their runt domain, while CBFB is a non-DNA-binding regulatory subunit that allosterically enhances the sequence-specific DNA-binding capacity of RUNX. The heterodimers bind to the core site of a number of enhancers and promoters, including murine leukemia virus, polyomavirus enhancer, T-cell receptor enhancers, LCK, IL3 and GM-CSF promoters. May be involved in the control of cellular proliferation and/or differentiation. In association with ZFHX3, up-regulates CDKN1A promoter activity following TGF-beta stimulation. CBF complexes repress ZBTB7B transcription factor during cytotoxic (CD8+) T cell development. They bind to RUNX-binding sequence within the ZBTB7B locus acting as transcriptional silencer and allowing for cytotoxic T cell differentiation. CBF complexes binding to the transcriptional silencer is essential for recruitment of nuclear protein complexes that catalyze epigenetic modifications to establish epigenetic ZBTB7B silencing. Necessary for the development and survival of sensory neurons expressing parvalbumin. The sequence is that of Runt-related transcription factor 3 (RUNX3) from Homo sapiens (Human).